We begin with the raw amino-acid sequence, 451 residues long: Phenylalanine--tRNA ligase, mitochondrial (451 aa).

Residues 157 to 160, Arg-179, 186 to 188, and 193 to 195 contribute to the substrate site; these read SAHQ, QHY, and QLE. The residue at position 202 (Lys-202) is an N6-acetyllysine. 2 residues coordinate substrate: Glu-287 and Phe-312. The FDX-ACB domain occupies 358–450; that stretch reads SKYPAVINDI…AVQLLGVEGR (93 aa).

The protein belongs to the class-II aminoacyl-tRNA synthetase family. As to quaternary structure, monomer.

It localises to the mitochondrion matrix. The protein localises to the mitochondrion. It carries out the reaction tRNA(Phe) + L-phenylalanine + ATP = L-phenylalanyl-tRNA(Phe) + AMP + diphosphate + H(+). Is responsible for the charging of tRNA(Phe) with phenylalanine in mitochondrial translation. To a lesser extent, also catalyzes direct attachment of m-Tyr (an oxidized version of Phe) to tRNA(Phe), thereby opening the way for delivery of the misacylated tRNA to the ribosome and incorporation of ROS-damaged amino acid into proteins. This Homo sapiens (Human) protein is Phenylalanine--tRNA ligase, mitochondrial (FARS2).